Here is a 91-residue protein sequence, read N- to C-terminus: Small ribosomal subunit protein uS19 (91 aa).

Belongs to the universal ribosomal protein uS19 family.

Its function is as follows. Protein S19 forms a complex with S13 that binds strongly to the 16S ribosomal RNA. This Chromohalobacter salexigens (strain ATCC BAA-138 / DSM 3043 / CIP 106854 / NCIMB 13768 / 1H11) protein is Small ribosomal subunit protein uS19.